We begin with the raw amino-acid sequence, 91 residues long: Small ribosomal subunit protein uS15 (91 aa).

It belongs to the universal ribosomal protein uS15 family. Part of the 30S ribosomal subunit. Forms a bridge to the 50S subunit in the 70S ribosome, contacting the 23S rRNA.

Its function is as follows. One of the primary rRNA binding proteins, it binds directly to 16S rRNA where it helps nucleate assembly of the platform of the 30S subunit by binding and bridging several RNA helices of the 16S rRNA. Forms an intersubunit bridge (bridge B4) with the 23S rRNA of the 50S subunit in the ribosome. This chain is Small ribosomal subunit protein uS15, found in Deinococcus geothermalis (strain DSM 11300 / CIP 105573 / AG-3a).